We begin with the raw amino-acid sequence, 68 residues long: Large ribosomal subunit protein uL29 (68 aa).

Belongs to the universal ribosomal protein uL29 family.

The sequence is that of Large ribosomal subunit protein uL29 from Streptococcus suis (strain 98HAH33).